The sequence spans 337 residues: Angiopoietin-related protein 7 (337 aa).

A signal peptide spans 1–21; it reads MLRETWLCVILVAFVSHPVWL. A coiled-coil region spans residues 30–110; that stretch reads QLKAAGCCEE…DIMQLQAAQT (81 aa). The N-linked (GlcNAc...) asparagine glycan is linked to N49. Residues 113–334 form the Fibrinogen C-terminal domain; that stretch reads QTSADAIYDC…RVEMKIRPEA (222 aa). A disulfide bond links C122 and C153. N-linked (GlcNAc...) asparagine glycans are attached at residues N244 and N258. A disulfide bridge connects residues C276 and C289. N320 carries N-linked (GlcNAc...) asparagine glycosylation.

In terms of assembly, homotetramer; disulfide-linked.

The protein localises to the secreted. In terms of biological role, has a role in the formation and organization of the extracellular matrix. In the eye, it functions as a mediator of dexamethasone-induced matrix deposition in the trabecular meshwork, the tissue responsible for the outflow of the ocular aqueous humor and for the maintenance of intraocular pressure. Is a negative regulator of angiogenesis in the cornea, and plays a major role in maintaining corneal avascularity and transparency. This is Angiopoietin-related protein 7 (Angptl7) from Mus musculus (Mouse).